The primary structure comprises 184 residues: Large ribosomal subunit protein uL6 (184 aa).

Belongs to the universal ribosomal protein uL6 family. Part of the 50S ribosomal subunit.

Its function is as follows. This protein binds to the 23S rRNA, and is important in its secondary structure. It is located near the subunit interface in the base of the L7/L12 stalk, and near the tRNA binding site of the peptidyltransferase center. The sequence is that of Large ribosomal subunit protein uL6 from Thermococcus gammatolerans (strain DSM 15229 / JCM 11827 / EJ3).